We begin with the raw amino-acid sequence, 165 residues long: Phosphopantetheine adenylyltransferase (165 aa).

A substrate-binding site is contributed by Ser10. Residues 10 to 11 (SF) and His18 contribute to the ATP site. Substrate contacts are provided by Lys42, Ser79, and Arg93. Residues 94–96 (GLR), Glu104, and 129–135 (VRPITAT) each bind ATP.

The protein belongs to the bacterial CoaD family. As to quaternary structure, homohexamer. It depends on Mg(2+) as a cofactor.

The protein localises to the cytoplasm. It carries out the reaction (R)-4'-phosphopantetheine + ATP + H(+) = 3'-dephospho-CoA + diphosphate. It participates in cofactor biosynthesis; coenzyme A biosynthesis; CoA from (R)-pantothenate: step 4/5. Its function is as follows. Reversibly transfers an adenylyl group from ATP to 4'-phosphopantetheine, yielding dephospho-CoA (dPCoA) and pyrophosphate. In Bradyrhizobium diazoefficiens (strain JCM 10833 / BCRC 13528 / IAM 13628 / NBRC 14792 / USDA 110), this protein is Phosphopantetheine adenylyltransferase.